A 185-amino-acid polypeptide reads, in one-letter code: Ribosome-recycling factor (185 aa).

The interval 136–155 is disordered; it reads NDDLKKLEKNGDITEDELRA.

The protein belongs to the RRF family.

It is found in the cytoplasm. Functionally, responsible for the release of ribosomes from messenger RNA at the termination of protein biosynthesis. May increase the efficiency of translation by recycling ribosomes from one round of translation to another. The protein is Ribosome-recycling factor of Bacillus velezensis (strain DSM 23117 / BGSC 10A6 / LMG 26770 / FZB42) (Bacillus amyloliquefaciens subsp. plantarum).